Reading from the N-terminus, the 134-residue chain is Small ribosomal subunit protein uS11 (134 aa).

Disordered stretches follow at residues 1–24 (MPPKSRAGAVKKVRRKEKKNVAHG) and 115–134 (IQDVTPQPHNGCRPPKRRRV). Residues 9–18 (AVKKVRRKEK) are compositionally biased toward basic residues.

Belongs to the universal ribosomal protein uS11 family. In terms of assembly, part of the 30S ribosomal subunit. Interacts with proteins S7 and S18. Binds to IF-3.

Its function is as follows. Located on the platform of the 30S subunit, it bridges several disparate RNA helices of the 16S rRNA. Forms part of the Shine-Dalgarno cleft in the 70S ribosome. The protein is Small ribosomal subunit protein uS11 of Saccharopolyspora erythraea (strain ATCC 11635 / DSM 40517 / JCM 4748 / NBRC 13426 / NCIMB 8594 / NRRL 2338).